A 254-amino-acid chain; its full sequence is MMAEPEESREPRGIRLQKVLSQAGIASRRAAEKMIVDGRVEVDGHVVTELGTRVDPQVAVVRVDGARVVLDDSLVYLALNKPRGMHSTMSDDRGRPCIGDLIERKVRGTKKLFHVGRLDADTEGLMLLTNDGELAHRLMHPSHEVPKTYLATVTGSVPRGLGRTLRAGIELDDGPAFVDDFAVVDAIPGKTLVRVTLHEGRNRIVRRLLAAAGFPVEALVRTDIGAVSLGKQRPGSVRALRSNEIGQLYQAVGL.

The S4 RNA-binding domain occupies 14–81 (IRLQKVLSQA…DSLVYLALNK (68 aa)). Asp-119 functions as the Nucleophile in the catalytic mechanism.

Belongs to the pseudouridine synthase RsuA family.

It carries out the reaction a uridine in RNA = a pseudouridine in RNA. This is an uncharacterized protein from Mycobacterium bovis (strain ATCC BAA-935 / AF2122/97).